A 226-amino-acid polypeptide reads, in one-letter code: AN1-type zinc finger protein 3 homolog (226 aa).

The A20-type zinc finger occupies 12-44 (PSLPPRCPCGFWGSSKTMNLCSKCFADFQKKQP). Zn(2+) contacts are provided by Cys-18, Cys-20, Cys-32, and Cys-35. The segment at 42–149 (KQPDEDTAPS…DRPDNSSRSK (108 aa)) is disordered. Polar residues-rich tracts occupy residues 49-59 (APSTSSSQSDL), 67-92 (DNGN…NVDS), and 105-114 (AHVSLTTPSK). Residues 134 to 146 (RLLDSGDRPDNSS) show a composition bias toward basic and acidic residues. The AN1-type zinc finger occupies 150 to 199 (QKSRRRCFRCQIKLELVQQELGSCRCGYVFCMLHRLPEQHDCTFDHMGRG). Residues Cys-156, Cys-159, Cys-173, Cys-175, Cys-180, His-183, His-189, and Cys-191 each contribute to the Zn(2+) site.

This Xenopus laevis (African clawed frog) protein is AN1-type zinc finger protein 3 homolog (zfand3).